The sequence spans 510 residues: 2,3-bisphosphoglycerate-independent phosphoglycerate mutase (510 aa).

Asp12 and Ser62 together coordinate Mn(2+). The Phosphoserine intermediate role is filled by Ser62. Substrate-binding positions include His123, 153 to 154, Arg185, Arg191, 260 to 263, and Lys335; these read RD and RPDR. Mn(2+)-binding residues include Asp402, His406, Asp443, His444, and His461.

Belongs to the BPG-independent phosphoglycerate mutase family. In terms of assembly, monomer. It depends on Mn(2+) as a cofactor.

The enzyme catalyses (2R)-2-phosphoglycerate = (2R)-3-phosphoglycerate. It participates in carbohydrate degradation; glycolysis; pyruvate from D-glyceraldehyde 3-phosphate: step 3/5. Its function is as follows. Catalyzes the interconversion of 2-phosphoglycerate and 3-phosphoglycerate. In Listeria innocua serovar 6a (strain ATCC BAA-680 / CLIP 11262), this protein is 2,3-bisphosphoglycerate-independent phosphoglycerate mutase.